The primary structure comprises 457 residues: Multidrug resistance protein MdtK (457 aa).

A run of 12 helical transmembrane segments spans residues 11–31 (LLAL…MGFV), 53–73 (IWLP…PVVA), 93–113 (WLAG…GYII), 127–147 (AVGY…FQVA), 160–180 (GMVM…IFIY), 191–211 (VGCG…MLWW), 243–263 (LPIA…ALLV), 276–296 (IALN…AAVT), 316–336 (RTGV…TVLM), 350–370 (VVLL…SDSI), 387–407 (IFFI…YLLA), and 418–438 (PAGF…MMML).

Belongs to the multi antimicrobial extrusion (MATE) (TC 2.A.66.1) family. MdtK subfamily.

It localises to the cell inner membrane. Multidrug efflux pump that functions probably as a Na(+)/drug antiporter. The polypeptide is Multidrug resistance protein MdtK (Klebsiella pneumoniae (strain 342)).